The sequence spans 396 residues: Succinyl-diaminopimelate desuccinylase (396 aa).

Position 74 (His-74) interacts with Zn(2+). Residue Asp-76 is part of the active site. Asp-107 is a binding site for Zn(2+). Glu-142 acts as the Proton acceptor in catalysis. Glu-143, Glu-171, and His-360 together coordinate Zn(2+).

Belongs to the peptidase M20A family. DapE subfamily. As to quaternary structure, homodimer. The cofactor is Zn(2+). Co(2+) serves as cofactor.

It catalyses the reaction N-succinyl-(2S,6S)-2,6-diaminopimelate + H2O = (2S,6S)-2,6-diaminopimelate + succinate. It functions in the pathway amino-acid biosynthesis; L-lysine biosynthesis via DAP pathway; LL-2,6-diaminopimelate from (S)-tetrahydrodipicolinate (succinylase route): step 3/3. Its function is as follows. Catalyzes the hydrolysis of N-succinyl-L,L-diaminopimelic acid (SDAP), forming succinate and LL-2,6-diaminopimelate (DAP), an intermediate involved in the bacterial biosynthesis of lysine and meso-diaminopimelic acid, an essential component of bacterial cell walls. This is Succinyl-diaminopimelate desuccinylase from Methylobacterium nodulans (strain LMG 21967 / CNCM I-2342 / ORS 2060).